The chain runs to 965 residues: Isoleucine--tRNA ligase (965 aa).

The 'HIGH' region motif lies at Pro-68–His-78. Glu-582 lines the L-isoleucyl-5'-AMP pocket. The 'KMSKS' region signature appears at Lys-623 to Ser-627. Residue Lys-626 coordinates ATP. Residues Cys-936, Cys-939, Cys-956, and Cys-959 each contribute to the Zn(2+) site.

This sequence belongs to the class-I aminoacyl-tRNA synthetase family. IleS type 1 subfamily. As to quaternary structure, monomer. The cofactor is Zn(2+).

The protein localises to the cytoplasm. It catalyses the reaction tRNA(Ile) + L-isoleucine + ATP = L-isoleucyl-tRNA(Ile) + AMP + diphosphate. Its function is as follows. Catalyzes the attachment of isoleucine to tRNA(Ile). As IleRS can inadvertently accommodate and process structurally similar amino acids such as valine, to avoid such errors it has two additional distinct tRNA(Ile)-dependent editing activities. One activity is designated as 'pretransfer' editing and involves the hydrolysis of activated Val-AMP. The other activity is designated 'posttransfer' editing and involves deacylation of mischarged Val-tRNA(Ile). This Prochlorococcus marinus subsp. pastoris (strain CCMP1986 / NIES-2087 / MED4) protein is Isoleucine--tRNA ligase.